A 69-amino-acid polypeptide reads, in one-letter code: Toxin Tma3 (69 aa).

Residues 2-66 form the LCN-type CS-alpha/beta domain; sequence KDDYPVDTAK…SPTKKSGRCN (65 aa). 4 disulfides stabilise this stretch: cysteine 14–cysteine 65, cysteine 18–cysteine 41, cysteine 27–cysteine 48, and cysteine 31–cysteine 50.

This sequence belongs to the long (4 C-C) scorpion toxin superfamily. Sodium channel inhibitor family. Expressed by the venom gland.

The protein localises to the secreted. In terms of biological role, inhibits voltage-gated sodium channels (Nav). This toxin shows insect lethality against crickets. This is Toxin Tma3 from Tityus macrochirus (Scorpion).